The primary structure comprises 91 residues: Small ribosomal subunit protein uS19 (91 aa).

Belongs to the universal ribosomal protein uS19 family.

Functionally, protein S19 forms a complex with S13 that binds strongly to the 16S ribosomal RNA. The chain is Small ribosomal subunit protein uS19 from Parasynechococcus marenigrum (strain WH8102).